The chain runs to 138 residues: Basic phospholipase A2 PLA-B' (138 aa).

Positions 1-16 (MRTLWITAVLLVGVEG) are cleaved as a signal peptide. Intrachain disulfides connect cysteine 42–cysteine 131, cysteine 44–cysteine 60, cysteine 59–cysteine 111, cysteine 65–cysteine 138, cysteine 66–cysteine 104, cysteine 73–cysteine 97, and cysteine 91–cysteine 102. Ca(2+) contacts are provided by tyrosine 43, glycine 45, and glycine 47. The active site involves histidine 63. Aspartate 64 contributes to the Ca(2+) binding site. Residue aspartate 105 is part of the active site.

It belongs to the phospholipase A2 family. Group II subfamily. D49 sub-subfamily. It depends on Ca(2+) as a cofactor. As to expression, expressed by the venom gland.

The protein resides in the secreted. It catalyses the reaction a 1,2-diacyl-sn-glycero-3-phosphocholine + H2O = a 1-acyl-sn-glycero-3-phosphocholine + a fatty acid + H(+). Functionally, PLA2 catalyzes the calcium-dependent hydrolysis of the 2-acyl groups in 3-sn-phosphoglycerides. This chain is Basic phospholipase A2 PLA-B', found in Protobothrops flavoviridis (Habu).